We begin with the raw amino-acid sequence, 356 residues long: DNA integrity scanning protein DisA (356 aa).

A DAC domain is found at 11-149 (VHTMRDTLQR…EGKSHILEEP (139 aa)). ATP-binding positions include Gly78, Leu96, and 109–113 (TRHRS).

The protein belongs to the DisA family. In terms of assembly, homooctamer. Mg(2+) is required as a cofactor.

The enzyme catalyses 2 ATP = 3',3'-c-di-AMP + 2 diphosphate. In terms of biological role, participates in a DNA-damage check-point. DisA forms globular foci that rapidly scan along the chromosomes searching for lesions. Its function is as follows. Also has diadenylate cyclase activity, catalyzing the condensation of 2 ATP molecules into cyclic di-AMP (c-di-AMP). c-di-AMP likely acts as a signaling molecule that may couple DNA integrity with a cellular process. In Corynebacterium efficiens (strain DSM 44549 / YS-314 / AJ 12310 / JCM 11189 / NBRC 100395), this protein is DNA integrity scanning protein DisA.